Reading from the N-terminus, the 450-residue chain is tRNA modification GTPase MnmE (450 aa).

(6S)-5-formyl-5,6,7,8-tetrahydrofolate contacts are provided by Arg23, Glu79, and Lys118. Residues 214 to 374 form the TrmE-type G domain; that stretch reads GITLILVGKP…LKEHILNKVG (161 aa). Asn224 provides a ligand contact to K(+). GTP-binding positions include 224–229, 243–249, and 268–271; these read NAGKSS, TSIAGTT, and DTAG. Ser228 is a Mg(2+) binding site. Positions 243, 245, and 248 each coordinate K(+). Thr249 contributes to the Mg(2+) binding site. Lys450 lines the (6S)-5-formyl-5,6,7,8-tetrahydrofolate pocket.

Belongs to the TRAFAC class TrmE-Era-EngA-EngB-Septin-like GTPase superfamily. TrmE GTPase family. As to quaternary structure, homodimer. Heterotetramer of two MnmE and two MnmG subunits. K(+) is required as a cofactor.

It localises to the cytoplasm. Its function is as follows. Exhibits a very high intrinsic GTPase hydrolysis rate. Involved in the addition of a carboxymethylaminomethyl (cmnm) group at the wobble position (U34) of certain tRNAs, forming tRNA-cmnm(5)s(2)U34. This chain is tRNA modification GTPase MnmE, found in Francisella tularensis subsp. holarctica (strain OSU18).